A 920-amino-acid polypeptide reads, in one-letter code: Phosphoenolpyruvate carboxylase (920 aa).

Active-site residues include histidine 138 and lysine 583.

It belongs to the PEPCase type 1 family. Mg(2+) serves as cofactor.

It carries out the reaction oxaloacetate + phosphate = phosphoenolpyruvate + hydrogencarbonate. Its function is as follows. Forms oxaloacetate, a four-carbon dicarboxylic acid source for the tricarboxylic acid cycle. In Streptococcus pyogenes serotype M1, this protein is Phosphoenolpyruvate carboxylase.